Consider the following 2410-residue polypeptide: MNSKNDLFIGFFFFFYNYYYYYNNNNNNNNNNNNNNNNNNNNNNNNNNNNNNIYIIVIIGLDPQQNHPSLKIPPPPSPTSPYVRRHARQHSRSNSSNSPGELTGGVEIIQQQNSINTQTSPPTSTSPNTVPPPPPTNTTTSSTTITRNSNNINNSNGGIINSSSGSNINNSSSSGVINTNINNSGGNISPTSNSLPSSNNNILYTSSGSNSGNNNNNNNTINISSGSSGINNSSNSNINNNNNNNSSSSSGIHASGSLTAIPTNTNSNSSIFHSSNSVNRINKSNYSADSLVLPPNRISQVPQSQTQPQLQISPSTSFSSQQQQQQQLQQQLQLQQQLQQQIQQQQQIQQQQNLHFTYSKTFTSGQPNTLVNLSSPPPQSKHLHVSSDHSFFNEVLTPTPVIHNSTNQNNQLLFGDSDPLSFLEYNNFINRYQPALKNNQPVSSYRQQQQIQHQIQLQQIQQQQQQQQQIQQQQLQQQQQIQQQQIQQQQQQIQQQQQQQQQQQQQQQQLQQIQPPPTIQPPPQQTTPTLRGNRSSGNLSGLNSFSLKQSTDSLTPPPNSQQSTVSSNSTPIAATPISPLTAPTSPPPPPPPPTNFNSKFNNNNNNNINNSSNNNTTVPPSPPPIIVLPKSPSSRSPRPASAPVPSAPFLVNNRVINTSSSSNISTNNTDLNLSSSSSSSPPLNISTASPSKSEDSPPTVSPSYKQQQQQQQQQQQQQQQLNNSSNSSYSPKPRSPSVSSPPPSSISPNSSPIGSPNISFHHHQQHQIPPPPPVLSNTNNNNNNNNNNNNNNNNNNNNNNNNNNNNNNNNNTNHTNKKEGDSSWFNMSFKFFKKKLVPSNEYRWDLRKSNSLTLNIEDKSRCSYRLPTSGSKGIAKSTQPFSSSFTYFELFITNGNGDKICFGLTTNDHPIEVYPGNYQGSYGYSGDGKCYFGTNEGRVYGPSFSSGDVVGCGYDSSSKTLYFTKNGVYLGVAAQKVNLIGLYPTVGLQNPGESVVINFFGPFSYRGAPEKPSKQSTIKDSGGSSIIPSEDLIPKEEFEVCRWSEKKNYHGKHVVVRNRTAFLPLDSPKDTIGGVRATQPFGEGFCYFEVIIDQLDKGQLSIGLANLEYPTFYHVGWMPRSYGYHNDDGRKFRWREEPGVNEGESYGSSYKKGDIIGCGLSFTSREIFFTKNGMYLGTAFSNVYGVFYPSVAFNEPGISITGVFGPPFKFSQVTLMLKNVNSTSILVPNGNNNNNSNNNNNNNNNNIIGNGKITTTTTTSTSPSSINNNEDISSNNNNNNNNNNNNNNNNNNNNNNNNNNNNNNSNSSNTNNNNINNTTNNNNSNSNNNNNNNNSNSNSNSNNNNINNNNNNNNNNNNIYLTKKPSIGSTDESSTGSLGGNNSSGNNNSSSGSIGNNSSIIKQRSPPHSINGPLMLPPSSTNNNNNIYSSYNSTTAGSSTTILPTLNHPIFGNTTSNNNSSSTLSVGGNNNLLGRHCQSLPITASTNHTLSSSLGVSFSSPSSSPKTSPRKIVNSSEDLGFVQTFQDQDGQPPSAWRRCGKSIKTKDDITLTIIKKKTSVAMADRPFSSNSSSTICYFEVYLEGHDKKGSITVGLSHSTYPFIKHIGREPKSYGFSSEGEKYGGSEIGEPYGPFFFFDGDSIASSCVIGCGINTSTRDIFFTKNGHYLGVAFSRVTSDPLYPSISFRGVVGGLCVATFPGGHFRFNIEDLPGISPSVWTEALGPDRQGSGFKNWAPNDVAIWLESFNYGQYRKNFRDNNISGRHLEGITHAMLKNDLGIEPYGHREDIINRLNRMIQIWNDKSPDSYPKIAIDSSDKIRWPASGGSSGGINISGGVVIGSSSGSDDGITEISSSSKNIRPYKSYTQKEIEDRNRRSTISGGEKKNKYYIDNQMDPHQIGSMDSDGLLPDFGQGPPDEKNSSKTLSNEQIRYLQQRKDEPPIAISSTGNGGSVSSTGGSSGFLTFPSSNSLTHPPQRDKPTQEFTHLPPITSNYKGITNTGQPHKSFDQPLELFPRHSAFSNNGNNGNNNNNNNNNNIKANQQQQQQSSYQQSQTQQQQQHITSTSTSTTNKWIDPFGGWETQSSLSHPPSRPPPPPPPPPQLPVRSEYEIDFNELEFGQTIGKGFFGEVKRGYWRETDVAIKIIYRDQFKTKSSLVMFQNEVGILSKLRHPNVVQFLGACTAGGEDHHCIVTEWMGGGSLRQFLTDHFNLLEQNPHIRLKLALDIAKGMNYLHGWTPPILHRDLSSRNILLDHNIDPKNPVVSSRQDIKCKISDFGLSRLKMEQASQMTQSVGCIPYMAPEVFKGDSNSEKSDVYSYGMVLFELLTSDEPQQDMKPMKMAHLAAYESYRPPIPLTTSSKWKEILTQCWDSNPDSRPTFKQIIVHLKEMEDQGVSSFASVPVQTIDTGVYA.

6 disordered regions span residues 29 to 48, 66 to 103, 116 to 158, 187 to 252, 508 to 647, and 659 to 820; these read NNNN…NNNN, NHPS…GELT, NTQT…SNGG, NISP…SSGI, QQLQ…VPSA, and SSSS…KKEG. 2 stretches are compositionally biased toward low complexity: residues 116–128 and 137–158; these read NTQT…TSPN and NTTT…SNGG. A compositionally biased stretch (pro residues) spans 514-525; the sequence is QPPPTIQPPPQQ. Positions 530-544 are enriched in low complexity; it reads LRGNRSSGNLSGLNS. Positions 545 to 554 are enriched in polar residues; sequence FSLKQSTDSL. A compositionally biased stretch (low complexity) spans 560–583; it reads SQQSTVSSNSTPIAATPISPLTAP. Pro residues predominate over residues 584–594; the sequence is TSPPPPPPPPT. 6 stretches are compositionally biased toward low complexity: residues 595–618, 627–639, 659–686, 701–738, 746–759, and 777–813; these read NFNS…NTTV, VLPK…SPRP, SSSS…LNIS, SPSY…SPSV, ISPN…PNIS, and NTNN…NNTN. B30.2/SPRY domains lie at 822 to 1004 and 1020 to 1209; these read SSWF…GPFS and DSGG…PPFK. Disordered regions lie at residues 1228–1428 and 1493–1512; these read PNGN…NNIY and SLGV…PRKI. 4 stretches are compositionally biased toward low complexity: residues 1229–1359, 1373–1399, 1419–1428, and 1493–1507; these read NGNN…NNNI, SSTG…NNSS, SSTNNNNNIY, and SLGV…SPKT. Residues 1481–1703 enclose the B30.2/SPRY 3 domain; that stretch reads PITASTNHTL…CVATFPGGHF (223 aa). The region spanning 1734-1798 is the SAM domain; it reads WAPNDVAIWL…INRLNRMIQI (65 aa). Residues 1862–2105 form a disordered region; it reads KSYTQKEIED…PPPPPQLPVR (244 aa). Basic and acidic residues predominate over residues 1865 to 1874; it reads TQKEIEDRNR. Residues 1951 to 1967 are compositionally biased toward low complexity; the sequence is SVSSTGGSSGFLTFPSS. Polar residues predominate over residues 1989–2002; that stretch reads ITSNYKGITNTGQP. The span at 2020 to 2070 shows a compositional bias: low complexity; the sequence is SNNGNNGNNNNNNNNNNIKANQQQQQQSSYQQSQTQQQQQHITSTSTSTTN. Over residues 2089–2102 the composition is skewed to pro residues; the sequence is PSRPPPPPPPPPQL. The Protein kinase domain maps to 2115-2387; the sequence is LEFGQTIGKG…FKQIIVHLKE (273 aa). ATP contacts are provided by residues 2121–2129 and K2142; that span reads IGKGFFGEV. Residue D2243 is the Proton acceptor of the active site.

The protein belongs to the protein kinase superfamily. TKL Tyr protein kinase family. Post-translationally, tyrosine kinase domain is capable of autophosphorylation, in vitro; however it is also autophosphorylated on serine and threonine residues.

It carries out the reaction L-tyrosyl-[protein] + ATP = O-phospho-L-tyrosyl-[protein] + ADP + H(+). Functionally, essential for spore differentiation. The sequence is that of Dual specificity protein kinase splA (splA) from Dictyostelium discoideum (Social amoeba).